The primary structure comprises 1600 residues: Eukaryotic translation initiation factor 4 gamma 1 (1600 aa).

Residues 1–88 (MNKAPQPTGP…ARPGPAPHVY (88 aa)) form a disordered region. Residues 7–24 (PTGPPPARSPGLPQPAFP) show a composition bias toward pro residues. The residue at position 15 (Ser-15) is a Phosphoserine. Residues 34–48 (STPQATQMNTPSQPR) are compositionally biased toward polar residues. Low complexity predominate over residues 60 to 79 (PSRAQPPSSAASRVQSAAPA). 2 positions are modified to omega-N-methylarginine: Arg-80 and Arg-117. 5 disordered regions span residues 173 to 230 (NQPP…NGES), 243 to 326 (SQGA…LSPE), 366 to 501 (ETHE…QLSQ), 507 to 526 (AATQ…KELN), and 541 to 606 (VDPA…DQWK). Residues 179–207 (APKRERKTIRIRDPNQGGKDITEEIMSGA) are PABPC1-binding. Residues 208–220 (RTASTPTPPQTGG) are compositionally biased toward polar residues. The residue at position 214 (Thr-214) is a Phosphothreonine. Ser-230 bears the Phosphoserine mark. Pro residues predominate over residues 269–280 (SPSPTPSPPPIL). A Phosphoserine modification is found at Ser-324. Over residues 438-449 (KVSSAALASILS) the composition is skewed to low complexity. The span at 463–479 (QEEEMEEDDDDEEGGEA) shows a compositional bias: acidic residues. Over residues 551 to 562 (QPPTGSNPSPES) the composition is skewed to polar residues. 2 stretches are compositionally biased toward basic and acidic residues: residues 578–587 (WDSKEDKIHN) and 596–606 (QKYEYKSDQWK). Lys-606 carries the N6-acetyllysine modification. The tract at residues 611–622 (EEKKRYDREFLL) is EIF4E-binding. A Phosphothreonine modification is found at Thr-651. Disordered stretches follow at residues 667–719 (GPDF…TRKI) and 734–760 (AEKA…DGSK). An eIF3/EIF4A-binding region spans residues 686 to 1089 (GPPRGGPGGE…GSIDSNNQLF (404 aa)). Omega-N-methylarginine occurs at positions 689 and 698. A compositionally biased stretch (low complexity) spans 697-707 (PRGPAGLGPRR). The segment covering 745 to 760 (TAADKDRGEEDADGSK) has biased composition (basic and acidic residues). Positions 765–993 (FRRVRSILNK…QDVLDLRQSN (229 aa)) constitute an MIF4G domain. Disordered regions lie at residues 1029–1117 (AKGS…SEAT) and 1129–1238 (QQTL…AALS). Ser-1032 bears the Phosphoserine mark. Omega-N-methylarginine is present on residues Arg-1036 and Arg-1046. Phosphoserine is present on residues Ser-1081 and Ser-1096. At Lys-1099 the chain carries N6-acetyllysine. A phosphoserine mark is found at Ser-1147 and Ser-1149. Basic and acidic residues predominate over residues 1148–1180 (LSRERGEKAGDRGDRLERSERGGDRGDRLDRAR). At Ser-1187 the chain carries Phosphoserine; by PKC/PRKCA. The span at 1188 to 1225 (FSKEVEERSRERPSQPEGLRKAASLTEDRGRDPVKREA) shows a compositional bias: basic and acidic residues. Residues Ser-1189, Ser-1196, and Ser-1211 each carry the phosphoserine modification. A Phosphothreonine modification is found at Thr-1213. 2 positions are modified to phosphoserine: Ser-1231 and Ser-1238. The MI domain maps to 1241–1363 (EVEKKSKAII…PMGELFREIT (123 aa)). In terms of domain architecture, W2 spans 1429–1599 (ESEAPGQRTL…REAEDEESDH (171 aa)). Residues 1450–1600 (LLKDGGSNQR…EAEDEESDHN (151 aa)) are EIF4A-binding. The necessary but not sufficient for MKNK1-binding stretch occupies residues 1585-1600 (FFNWLREAEDEESDHN). Ser-1597 is subject to Phosphoserine.

It belongs to the eukaryotic initiation factor 4G family. In terms of assembly, eIF4F is a multi-subunit complex, the composition of which varies with external and internal environmental conditions. It is composed of at least EIF4A, EIF4E (cap-binding) and EIF4G1/EIF4G3. Interacts with eIF3 complex, mutually exclusive with EIF4A1 or EIF4A2, EIF4E and through its N-terminus with PABPC1. Interacts with EIF4E or with EIF1 (mutually exclusive) through a common binding site. Interacts through its C-terminus with the serine/threonine kinases MKNK1, and with MKNK2. Appears to act as a scaffold protein, holding these enzymes in place to phosphorylate EIF4E. Non-phosphorylated EIF4EBP1 competes with EIF4G1/EIF4G3 to interact with EIF4E; insulin stimulated MAP-kinase (MAPK1 and MAPK3) phosphorylation of EIF4EBP1 causes dissociation of the complex allowing EIF4G1/EIF4G3 to bind and consequent initiation of translation. EIF4G1/EIF4G3 interacts with PABPC1 to bring about circularization of the mRNA. Interacts with EIF4E3. Interacts with CIRBP and MIF4GD. Interacts with RBM4. Interacts with HNRNPD/AUF1; the interaction requires RNA. Interacts with DDX3X; the interaction requires RNA. Interacts with DAZAP2. As to quaternary structure, (Microbial infection) Interacts with murine norovirus viral genome-linked protein (via C-terminus); this interaction plays a role in translation of viral proteins. Phosphorylated at multiple sites in vivo. Phosphorylation at Ser-1187 by PRKCA induces binding to MKNK1.

The protein resides in the cytoplasm. It localises to the nucleus. Its subcellular location is the stress granule. Its function is as follows. Component of the protein complex eIF4F, which is involved in the recognition of the mRNA cap, ATP-dependent unwinding of 5'-terminal secondary structure and recruitment of mRNA to the ribosome. Exists in two complexes, either with EIF1 or with EIF4E (mutually exclusive). Together with EIF1, is required for leaky scanning, in particular for avoiding cap-proximal start codon. Together with EIF4E, antagonizes the scanning promoted by EIF1-EIF4G1 and locates the start codon (through a TISU element) without scanning. As a member of the eIF4F complex, required for endoplasmic reticulum stress-induced ATF4 mRNA translation. The protein is Eukaryotic translation initiation factor 4 gamma 1 (Eif4g1) of Mus musculus (Mouse).